A 376-amino-acid chain; its full sequence is MEDPNRMMAHTGGMMAPQGYSLSGQDDGQNTGNENEVRKQKDIGEILQQIMSISEQSLDEAQARKHTLNCHRMKPALFSVLCEIKEKTVLSIRNTQEEEPPDPQLMRLDNMLIAEGVAGPEKGGGGAAAASAAAASQGGSLSIDGADNAIEHSDYRAKLAQIRQIYHQELEKYEQACNEFTTHVMNLLREQSRTRPITPKEIERMVQIIHKKFSSIQMQLKQSTCEAVMILRSRFLDARRKRRNFSKQASEILNEYFYSHLSNPYPSEEAKEELARKCGITVSQVSNWFGNKRIRYKKNIGKAQEEANLYAAKKAAGASPYSMAGPPSGTTTPMMSPAPPQDSMGYTMGSGGYDQQQPYDNSMGGYDPNLHQDLSP.

The disordered stretch occupies residues 16–35 (APQGYSLSGQDDGQNTGNEN). Residues 20 to 34 (YSLSGQDDGQNTGNE) are compositionally biased toward polar residues. A PBC domain is found at 38 to 237 (RKQKDIGEIL…VMILRSRFLD (200 aa)). The interval 45–124 (EILQQIMSIS…EGVAGPEKGG (80 aa)) is PBC-A. Positions 127–237 (AAAASAAAAS…VMILRSRFLD (111 aa)) are PBC-B. A DNA-binding region (homeobox; TALE-type) is located at residues 238–300 (ARRKRRNFSK…NKRIRYKKNI (63 aa)). Residues 318-335 (ASPYSMAGPPSGTTTPMM) are compositionally biased toward low complexity. The interval 318–376 (ASPYSMAGPPSGTTTPMMSPAPPQDSMGYTMGSGGYDQQQPYDNSMGGYDPNLHQDLSP) is disordered.

It belongs to the TALE/PBX homeobox family. As to quaternary structure, interacts with Ubx and hth.

It is found in the nucleus. Functionally, transcription factor which acts with the selector homeodomain proteins altering the regulation of downstream target genes such as wingless (wg), teashirt (tsh) and decapentaplegic (dpp), thus affecting segmental identity. Delimits the eye field and prevent inappropriate eye development. Required for proper localization of chordotonal organs within the peripheral nervous system. In Drosophila pseudoobscura pseudoobscura (Fruit fly), this protein is Homeobox protein extradenticle.